We begin with the raw amino-acid sequence, 78 residues long: Large ribosomal subunit protein bL28 (78 aa).

The disordered stretch occupies residues 1–21 (MARVCQVTGKGPMTGNNVSHA).

It belongs to the bacterial ribosomal protein bL28 family.

This chain is Large ribosomal subunit protein bL28, found in Bordetella petrii (strain ATCC BAA-461 / DSM 12804 / CCUG 43448).